The primary structure comprises 252 residues: Putative teichuronic acid biosynthesis glycosyltransferase TuaG (252 aa).

Belongs to the glycosyltransferase 2 family.

It functions in the pathway cell wall biogenesis; teichuronic acid biosynthesis. The sequence is that of Putative teichuronic acid biosynthesis glycosyltransferase TuaG (tuaG) from Bacillus subtilis (strain 168).